Consider the following 293-residue polypeptide: ADP-forming sulfoacetate-CoA ligase subunit SauD (293 aa).

CoA is bound by residues 17–20 (TGKE), Lys-43, and 96–98 (IAD). His-251 acts as the Tele-phosphohistidine intermediate in catalysis.

It belongs to the succinate/malate CoA ligase alpha subunit family. Forms a complex with SauC.

The enzyme catalyses sulfoacetate + ATP + CoA = sulfoacetyl-CoA + ADP + phosphate. Functionally, involved in the degradation of sulfoacetate. Catalyzes the CoA- and ATP-dependent conversion of sulfoacetate to sulfoacetyl-CoA and ADP. Cannot use other sulfonic and carboxylic acids, and shows only residual activity with 3-sulfopropanoate and malonic acid. The chain is ADP-forming sulfoacetate-CoA ligase subunit SauD from Bilophila wadsworthia (strain 3_1_6).